Consider the following 417-residue polypeptide: Probable lysophospholipase BODYGUARD 4 (417 aa).

Positions 1–49 (MSFPRKFGTAIHAALSFIVFFFLDLLDAILCVVYEFVDEILEENSTGCY) are cleaved as a signal peptide. C50 carries the N-palmitoyl cysteine lipid modification. The 110-residue stretch at 150 to 259 (VIFIHGFMGS…PPYFPSSVEG (110 aa)) folds into the AB hydrolase-1 domain. The active site involves H154. S225 serves as the catalytic Nucleophile. Active-site charge relay system residues include D367 and H395.

Expressed in epidermal cells.

It localises to the cell membrane. It is found in the secreted. The protein resides in the cell wall. In terms of biological role, involved in cuticle development and morphogenesis. The sequence is that of Probable lysophospholipase BODYGUARD 4 from Arabidopsis thaliana (Mouse-ear cress).